The primary structure comprises 338 residues: Mycothiol acetyltransferase (338 aa).

2 N-acetyltransferase domains span residues 29 to 173 (PETY…HQLP) and 181 to 338 (ISLR…NKFQ). Asp55 serves as a coordination point for 1D-myo-inositol 2-(L-cysteinylamino)-2-deoxy-alpha-D-glucopyranoside. 105-107 (LVV) provides a ligand contact to acetyl-CoA. Glu208, Lys248, and Glu261 together coordinate 1D-myo-inositol 2-(L-cysteinylamino)-2-deoxy-alpha-D-glucopyranoside. Acetyl-CoA is bound by residues 265-267 (VGI) and 272-278 (QGKGLGK). Tyr299 contributes to the 1D-myo-inositol 2-(L-cysteinylamino)-2-deoxy-alpha-D-glucopyranoside binding site.

Belongs to the acetyltransferase family. MshD subfamily. As to quaternary structure, monomer.

The catalysed reaction is 1D-myo-inositol 2-(L-cysteinylamino)-2-deoxy-alpha-D-glucopyranoside + acetyl-CoA = mycothiol + CoA + H(+). Its function is as follows. Catalyzes the transfer of acetyl from acetyl-CoA to desacetylmycothiol (Cys-GlcN-Ins) to form mycothiol. The sequence is that of Mycothiol acetyltransferase from Renibacterium salmoninarum (strain ATCC 33209 / DSM 20767 / JCM 11484 / NBRC 15589 / NCIMB 2235).